The sequence spans 82 residues: MSEVSSAPVRRPFHRRRKTCPFSGANAPRIDYKDVRLLQRYISERGKIVPSRITAVSQKKQRELAQAIKRARFLGLLPYVVA.

Belongs to the bacterial ribosomal protein bS18 family. In terms of assembly, part of the 30S ribosomal subunit. Forms a tight heterodimer with protein bS6.

Its function is as follows. Binds as a heterodimer with protein bS6 to the central domain of the 16S rRNA, where it helps stabilize the platform of the 30S subunit. The sequence is that of Small ribosomal subunit protein bS18 from Rhizobium rhizogenes (strain K84 / ATCC BAA-868) (Agrobacterium radiobacter).